The following is a 190-amino-acid chain: Pyridoxal 5'-phosphate synthase subunit PdxT (190 aa).

G46 to S48 provides a ligand contact to L-glutamine. C78 serves as the catalytic Nucleophile. L-glutamine-binding positions include R106 and I135–R136. Active-site charge relay system residues include H171 and E173.

This sequence belongs to the glutaminase PdxT/SNO family. As to quaternary structure, in the presence of PdxS, forms a dodecamer of heterodimers. Only shows activity in the heterodimer.

The catalysed reaction is aldehydo-D-ribose 5-phosphate + D-glyceraldehyde 3-phosphate + L-glutamine = pyridoxal 5'-phosphate + L-glutamate + phosphate + 3 H2O + H(+). It catalyses the reaction L-glutamine + H2O = L-glutamate + NH4(+). The protein operates within cofactor biosynthesis; pyridoxal 5'-phosphate biosynthesis. Its function is as follows. Catalyzes the hydrolysis of glutamine to glutamate and ammonia as part of the biosynthesis of pyridoxal 5'-phosphate. The resulting ammonia molecule is channeled to the active site of PdxS. This chain is Pyridoxal 5'-phosphate synthase subunit PdxT, found in Dictyoglomus turgidum (strain DSM 6724 / Z-1310).